Reading from the N-terminus, the 196-residue chain is Homeobox protein ANF-1 (196 aa).

The homeobox DNA-binding region spans 119 to 178 (GRRPRTAFTRNQIEVLENVFKMNSYPGIDIREELARKLDLEEDRIQIWFQNRRAKLKRSH).

It belongs to the ANF homeobox family.

The protein resides in the nucleus. Its function is as follows. May be involved in the early patterning of the most anterior region of the main embryonic body axis. This Gallus gallus (Chicken) protein is Homeobox protein ANF-1.